The sequence spans 1463 residues: Secretory phospholipase A2 receptor (1463 aa).

The N-terminal stretch at 1-20 (MLLSPSLLLLLLLGAPRGCA) is a signal peptide. Topologically, residues 21 to 1397 (EGVAAALTPE…ALPEKGPSHS (1377 aa)) are extracellular. Residues 38 to 161 (KGIFVIQSES…GSGGGDICEY (124 aa)) enclose the Ricin B-type lectin domain. 14 disulfides stabilise this stretch: Cys51–Cys64, Cys89–Cys106, Cys178–Cys204, Cys192–Cys219, Cys260–Cys354, Cys330–Cys346, Cys406–Cys501, Cys478–Cys493, Cys617–Cys634, Cys699–Cys796, Cys774–Cys788, Cys840–Cys937, Cys914–Cys929, and Cys1067–Cys1087. Residue Asn93 is glycosylated (N-linked (GlcNAc...) asparagine). Positions 173–221 (THGMPCMFPFQYNHQWHHECTREGREDDLLWCATTSRYERDEKWGFCPD) constitute a Fibronectin type-II domain. 8 consecutive C-type lectin domains span residues 238 to 355 (NSHI…YICK), 385 to 502 (YNRN…YICK), 522 to 643 (HGGF…MSLC), 673 to 797 (GLAS…WICK), 819 to 938 (YQDA…SICK), 965 to 1096 (FNYK…GFVC), 1121 to 1232 (YGNR…GAIC), and 1257 to 1378 (FKSN…FICK). Residue Asn454 is glycosylated (N-linked (GlcNAc...) asparagine). Asn1123 carries N-linked (GlcNAc...) asparagine glycosylation. 3 disulfide bridges follow: Cys1209–Cys1223, Cys1280–Cys1377, and Cys1354–Cys1369. A helical membrane pass occupies residues 1398–1418 (IIPLAVVLTLIVIVAICTLSF). Residues 1419–1463 (CIYKHNGGFFRRLAGFRNPYYPATNFSTVYLEENILISDLEKSDQ) lie on the Cytoplasmic side of the membrane. An Endocytosis signal motif is present at residues 1436–1442 (NPYYPAT).

In terms of assembly, interacts with sPLA2-IB/PLA2G1B; this interaction mediates intracellular signaling as well as clearance of extracellular sPLA2-IB/PLA2G1B via endocytotic pathway. Interacts with sPLA2-X/PLA2G10; this interaction mediates sPLA2-X/PLA2G10 clearance and inactivation. In terms of processing, the secretory phospholipase A2 receptor form may be produced by the action of metalloproteinases. It contains all extracellular domains and only lacks transmembrane and cytosolic regions. It is however unclear whether this form is produced by proteolytic cleavage as suggested by some experiments, or by alternative splicing, as in the case of isoform 2 that shares all characteristics of secretory phospholipase A2 receptor form. Expressed in podocytes (at protein level). Present in lung macrophage (at protein level). Highly expressed in kidney. Also expressed in pancreas, amnion, choriodecidua and placenta. Isoform 2 is expressed at much lower level.

It localises to the cell membrane. The protein resides in the secreted. Receptor for secretory phospholipase A2 (sPLA2). Acts as a receptor for phospholipase sPLA2-IB/PLA2G1B but not sPLA2-IIA/PLA2G2A. Also able to bind to snake PA2-like toxins. Although its precise function remains unclear, binding of sPLA2 to its receptor participates in both positive and negative regulation of sPLA2 functions as well as clearance of sPLA2. Binding of sPLA2-IB/PLA2G1B induces various effects depending on the cell type, such as activation of the mitogen-activated protein kinase (MAPK) cascade to induce cell proliferation, the production of lipid mediators, selective release of arachidonic acid in bone marrow-derived mast cells. In neutrophils, binding of sPLA2-IB/PLA2G1B can activate p38 MAPK to stimulate elastase release and cell adhesion. May be involved in responses in pro-inflammatory cytokine productions during endotoxic shock. Also has endocytic properties and rapidly internalizes sPLA2 ligands, which is particularly important for the clearance of extracellular sPLA2s to protect their potent enzymatic activities. The soluble secretory phospholipase A2 receptor form is circulating and acts as a negative regulator of sPLA2 functions by blocking the biological functions of sPLA2-IB/PLA2G1B. In podocytes, binding of sPLA2-IB/PLA2G1B can regulate podocyte survival and glomerular homeostasis. The sequence is that of Secretory phospholipase A2 receptor (PLA2R1) from Homo sapiens (Human).